The chain runs to 240 residues: Probable transcriptional regulatory protein jhp_0149 (240 aa).

Belongs to the TACO1 family.

The protein resides in the cytoplasm. In Helicobacter pylori (strain J99 / ATCC 700824) (Campylobacter pylori J99), this protein is Probable transcriptional regulatory protein jhp_0149.